A 372-amino-acid chain; its full sequence is Hydrogenase-2 small chain (372 aa).

A signal peptide (tat-type signal) is located at residues 1–37 (MTGDNTLIHSHGINRRDFMKLCAALAATMGLSSKAAA). [4Fe-4S] cluster is bound by residues cysteine 59, cysteine 62, cysteine 157, cysteine 191, histidine 229, cysteine 232, cysteine 257, and cysteine 263. Residues cysteine 272, cysteine 292, and cysteine 295 each contribute to the [3Fe-4S] cluster site.

Belongs to the [NiFe]/[NiFeSe] hydrogenase small subunit family. In terms of assembly, heterodimer of a large and a small subunit. Requires [4Fe-4S] cluster as cofactor. The cofactor is [3Fe-4S] cluster. Predicted to be exported by the Tat system. The position of the signal peptide cleavage has not been experimentally proven.

The protein resides in the cell membrane. It localises to the periplasm. The enzyme catalyses H2 + A = AH2. In terms of biological role, this is one of three E.coli hydrogenases synthesized in response to different physiological conditions. HYD2 is involved in hydrogen uptake. This is Hydrogenase-2 small chain (hybO) from Escherichia coli O157:H7.